Here is a 144-residue protein sequence, read N- to C-terminus: Maximins 7/H1 (144 aa).

A signal peptide spans Met1–Ala18. A propeptide spanning residues Arg19–Arg43 is cleaved from the precursor. Asn70 carries the post-translational modification Asparagine amide. Residues Thr74–Arg123 constitute a propeptide that is removed on maturation. Leu143 is subject to Leucine amide.

Belongs to the bombinin family. In terms of tissue distribution, expressed by the skin glands.

The protein localises to the secreted. Maximin-7 shows antimicrobial activity against bacteria and against the fungus C.albicans. It has little hemolytic activity. Its function is as follows. Maximin-H1 shows antibacterial activity against both Gram-positive and Gram-negative bacteria. It also shows antimicrobial activity against the fungus C.albicans. Shows strong hemolytic activity. This is Maximins 7/H1 from Bombina maxima (Giant fire-bellied toad).